The sequence spans 267 residues: Apolipoprotein A-I (267 aa).

The signal sequence occupies residues 1–18; the sequence is MKAAVLTLAVLFLTGSQA. 2 consecutive repeat copies span residues 68-89 and 90-111. The 10 X approximate tandem repeats stretch occupies residues 68–267; it reads LKLLDNWDSV…EEYTKKLNTQ (200 aa). Met-110 is subject to Methionine sulfoxide. The stretch at 112-122 is one 3; half-length repeat; that stretch reads KDLEEVKAKVQ. Repeat copies occupy residues 123–144, 145–166, 167–188, 189–210, and 211–232. Position 136 is a methionine sulfoxide (Met-136). The stretch at 233–243 is one 9; half-length repeat; that stretch reads PALEDLRQGLL. Copy 10 of the repeat occupies 244-267; it reads PVLESFKVSFLSALEEYTKKLNTQ.

Belongs to the apolipoprotein A1/A4/E family. As to quaternary structure, homodimer. Interacts with APOA1BP and CLU. Component of a sperm activating protein complex (SPAP), consisting of APOA1, an immunoglobulin heavy chain, an immunoglobulin light chain and albumin. Interacts with NDRG1. Interacts with SCGB3A2. Interacts with NAXE and YJEFN3. Glycosylated. Post-translationally, palmitoylated. In terms of processing, phosphorylation sites are present in the extracellular medium. Major protein of plasma HDL, also found in chylomicrons.

The protein localises to the secreted. Its function is as follows. Participates in the reverse transport of cholesterol from tissues to the liver for excretion by promoting cholesterol efflux from tissues and by acting as a cofactor for the lecithin cholesterol acyltransferase (LCAT). As part of the SPAP complex, activates spermatozoa motility. The polypeptide is Apolipoprotein A-I (APOA1) (Pan paniscus (Pygmy chimpanzee)).